The following is a 247-amino-acid chain: DNA polymerase sliding clamp (247 aa).

Belongs to the PCNA family. Homotrimer. The subunits circularize to form a toroid; DNA passes through its center. Replication factor C (RFC) is required to load the toroid on the DNA.

Sliding clamp subunit that acts as a moving platform for DNA processing. Responsible for tethering the catalytic subunit of DNA polymerase and other proteins to DNA during high-speed replication. This chain is DNA polymerase sliding clamp, found in Haloarcula marismortui (strain ATCC 43049 / DSM 3752 / JCM 8966 / VKM B-1809) (Halobacterium marismortui).